A 185-amino-acid chain; its full sequence is Pericyclase pydY (185 aa).

This sequence belongs to the pericyclase pydY family.

The protein operates within mycotoxin biosynthesis. Pericyclase; part of the gene cluster that mediates the biosynthesis of pyrrocidines, fungal natural products containing a macrocyclic para-cyclophane connected to a decahydrofluorene ring system that show potent antibiotic activities toward Gram-negative bacteria. Within the pathway, pydY is involved in the late Diels-Alder cycloaddition step that leads to the formation of the decahydrofluorene core. The pathway begins with the PKS-NRPS pydA which, with the help of the trans-enoyl reductase pydC, synthesizes the polyketide-tyrosyl acyl thioester product which can be reductively off-loaded by the terminal reductase (R) domain in pydA. The alpha/beta hydrolase pydG is then required to catalyze the subsequent Knoevenagel condensation that affords the 3-pyrrolin-2-one ring, whereas the four proteins pydB, pydE, pydX and pydZ then function synergistically to form the cyclophane. PydB and the membrane-bound pydX and pydZ are lipid-binding proteins that can sequester and mold the pdyG product into the inverse S-shape. Binding of the medium chain reductase pydE to the complex would trigger the cascade oxidative cyclization. PydY is involved in the Diels-Alder cycloaddition that forms the decahydrofluorene core. Additional non-enzymatic hydroxylation yields pyrrocidine A2 which can be further reduced into pyrrocidine B by an endogenous reductase. The chain is Pericyclase pydY from Acremonium sp.